The chain runs to 509 residues: Cobyric acid synthase (509 aa).

The region spanning 262–459 (ELKVGIIKLP…IHGIFENDDW (198 aa)) is the GATase cobBQ-type domain. Cysteine 343 functions as the Nucleophile in the catalytic mechanism. Histidine 451 is a catalytic residue.

The protein belongs to the CobB/CobQ family. CobQ subfamily.

It participates in cofactor biosynthesis; adenosylcobalamin biosynthesis. Functionally, catalyzes amidations at positions B, D, E, and G on adenosylcobyrinic A,C-diamide. NH(2) groups are provided by glutamine, and one molecule of ATP is hydrogenolyzed for each amidation. The protein is Cobyric acid synthase of Prochlorococcus marinus subsp. pastoris (strain CCMP1986 / NIES-2087 / MED4).